A 317-amino-acid chain; its full sequence is Putative toluene-4-sulfonate monooxygenase system reductase subunit TsaB2 (317 aa).

An FAD-binding FR-type domain is found at 4 to 106 (DVPVTVAAVR…SAPRNLFEMA (103 aa)). 110–220 (RRVLLLAGGI…PGSVRMERFK (111 aa)) contacts NAD(+). Residues 232 to 317 (FELVLQRAGL…CGGGRLVLDI (86 aa)) enclose the 2Fe-2S ferredoxin-type domain. 3 residues coordinate [2Fe-2S] cluster: Cys-266, Cys-271, and Cys-274.

As to quaternary structure, monomer. Part of the p-toluenesulfonate methyl-monooxygenase complex TsaBM, comprising the reductase TsaB and the oxygenase TsaM. It depends on FMN as a cofactor.

In terms of biological role, involved in the toluene-4-sulfonate degradation pathway. The chain is Putative toluene-4-sulfonate monooxygenase system reductase subunit TsaB2 (tsaB2) from Comamonas testosteroni (Pseudomonas testosteroni).